Consider the following 582-residue polypeptide: Threonine--tRNA ligase (582 aa).

The catalytic stretch occupies residues 185 to 478; sequence DHRKLGKELE…LTEQYGGAFP (294 aa). Zn(2+) is bound by residues C278, H329, and H455.

It belongs to the class-II aminoacyl-tRNA synthetase family. As to quaternary structure, homodimer. It depends on Zn(2+) as a cofactor.

The protein localises to the cytoplasm. It catalyses the reaction tRNA(Thr) + L-threonine + ATP = L-threonyl-tRNA(Thr) + AMP + diphosphate + H(+). In terms of biological role, catalyzes the attachment of threonine to tRNA(Thr) in a two-step reaction: L-threonine is first activated by ATP to form Thr-AMP and then transferred to the acceptor end of tRNA(Thr). Also edits incorrectly charged L-seryl-tRNA(Thr). In Dehalococcoides mccartyi (strain CBDB1), this protein is Threonine--tRNA ligase.